Consider the following 89-residue polypeptide: Dynein light chain (89 aa).

It belongs to the dynein light chain family. As to expression, tegument.

Its subcellular location is the cytoplasm. It is found in the cytoskeleton. Its function is as follows. Acts as a non-catalytic accessory component of a dynein complex. This Schistosoma mansoni (Blood fluke) protein is Dynein light chain (DLC).